Here is a 151-residue protein sequence, read N- to C-terminus: Ribosome maturation factor RimP (151 aa).

It belongs to the RimP family.

Its subcellular location is the cytoplasm. Required for maturation of 30S ribosomal subunits. The polypeptide is Ribosome maturation factor RimP (Pasteurella multocida (strain Pm70)).